The chain runs to 245 residues: Cypemycin N-terminal methyltransferase (245 aa).

The protein belongs to the methyltransferase superfamily.

The enzyme catalyses N-terminal L-alanyl-[cypemycin] + 2 S-adenosyl-L-methionine = N-terminal N,N-dimethyl-L-alanyl-[cypemycin] + 2 S-adenosyl-L-homocysteine + 3 H(+). In terms of biological role, involved in the biosynthesis of the lanaridin cypemycin. The enzyme can methylate a variety of oligopeptides, cyclic peptides and the epsilon-amino group of lysine. This chain is Cypemycin N-terminal methyltransferase, found in Streptomyces sp.